The primary structure comprises 646 residues: Cartilage acidic protein 1 (646 aa).

The N-terminal stretch at 1-28 (MAPSADPGMVRMALLLLPPLWLLPLTGG) is a signal peptide. The stretch at 47–89 (DYDSNPTQLNYGVAVTDVDHDGDFEIVVAGYTGPNLVLKYNRA) is one FG-GAP 1; atypical repeat. Residues 106–148 (YALRDRQGNAIGVTACDIDGDGREEIYFLNTNNAFSGVATYTD) form an FG-GAP 2; atypical repeat. The stretch at 284–334 (AGVDDPHQHGRGVALADFNRDGKVDIVYGNWNGPHRLYLQMSAHGKVRFRD) is one FG-GAP 3; atypical repeat. Residues 396 to 438 (GDALEPEGRGTGGVVTDFDGDGMLDLILSHGESMAQPLSVFRG) form an FG-GAP 4; atypical repeat. The region spanning 560 to 606 (DTNECIQFPFVCPRDKPVCVNTYGSYRCRTNKRCNRGYEPNEDGTAC) is the EGF-like domain. Cystine bridges form between Cys564-Cys578, Cys571-Cys587, and Cys593-Cys606.

The protein resides in the secreted. The protein localises to the extracellular space. Its subcellular location is the extracellular matrix. The protein is Cartilage acidic protein 1 (Crtac1) of Mus musculus (Mouse).